The sequence spans 601 residues: Rhizobactin siderophore biosynthesis protein RhbF (601 aa).

The protein belongs to the IucA/IucC family.

It participates in siderophore biosynthesis; rhizobactin biosynthesis. The protein is Rhizobactin siderophore biosynthesis protein RhbF (rhbF) of Rhizobium meliloti (strain 1021) (Ensifer meliloti).